Here is a 504-residue protein sequence, read N- to C-terminus: Dolichol kinase sec59 (504 aa).

Residues Met1–Gln55 are Cytoplasmic-facing. The chain crosses the membrane as a helical span at residues Ile56 to Ile76. Residue Gln77 is a topological domain, lumenal. Residues Leu78–Gly98 form a helical membrane-spanning segment. Residues Glu99 to Ser157 lie on the Cytoplasmic side of the membrane. Residues Phe158–Phe178 traverse the membrane as a helical segment. Topologically, residues Ser179–Ser187 are lumenal. A helical transmembrane segment spans residues Val188 to Leu208. At Lys209 to His215 the chain is on the cytoplasmic side. Residues Leu216–Val236 form a helical membrane-spanning segment. Topologically, residues Ser237 to Ser263 are lumenal. Residues Leu264–Leu284 traverse the membrane as a helical segment. At Leu285–Leu325 the chain is on the cytoplasmic side. The helical transmembrane segment at Asp326–Ile347 threads the bilayer. At Arg348–Lys373 the chain is on the lumenal side. A helical membrane pass occupies residues Gly374–Ser394. The Cytoplasmic portion of the chain corresponds to Asn395–Ser403. The helical transmembrane segment at Val404–Gly424 threads the bilayer. Topologically, residues Lys425–Glu440 are lumenal. The helical transmembrane segment at Gly441–Val461 threads the bilayer. Position 462 (Cys462) is a topological domain, cytoplasmic. The helical transmembrane segment at Pro463–Val483 threads the bilayer. The Lumenal portion of the chain corresponds to Ser484–Asp504.

Belongs to the polyprenol kinase family.

Its subcellular location is the endoplasmic reticulum membrane. The catalysed reaction is a di-trans,poly-cis-dolichol + CTP = a di-trans,poly-cis-dolichyl phosphate + CDP + H(+). Its pathway is protein modification; protein glycosylation. Its function is as follows. Catalyzes CTP-mediated phosphorylation of dolichol, the terminal step in de novo dolichyl monophosphate (Dol-P) biosynthesis. Dol-P is a lipid carrier essential for the synthesis of N-linked and O-linked oligosaccharides and for GPI anchors. The sequence is that of Dolichol kinase sec59 from Schizosaccharomyces pombe (strain 972 / ATCC 24843) (Fission yeast).